The following is a 116-amino-acid chain: NADPH-dependent 7-cyano-7-deazaguanine reductase (116 aa).

Cys-31 serves as the catalytic Thioimide intermediate. The active-site Proton donor is Asp-38. Substrate is bound by residues 53–55 and 72–73; these read IEL and YE.

Belongs to the GTP cyclohydrolase I family. QueF type 1 subfamily.

Its subcellular location is the cytoplasm. It catalyses the reaction 7-aminomethyl-7-carbaguanine + 2 NADP(+) = 7-cyano-7-deazaguanine + 2 NADPH + 3 H(+). It functions in the pathway tRNA modification; tRNA-queuosine biosynthesis. Catalyzes the NADPH-dependent reduction of 7-cyano-7-deazaguanine (preQ0) to 7-aminomethyl-7-deazaguanine (preQ1). The polypeptide is NADPH-dependent 7-cyano-7-deazaguanine reductase (Pelodictyon phaeoclathratiforme (strain DSM 5477 / BU-1)).